We begin with the raw amino-acid sequence, 284 residues long: 4-hydroxy-3-methylbut-2-enyl diphosphate reductase (284 aa).

[4Fe-4S] cluster is bound at residue C12. The (2E)-4-hydroxy-3-methylbut-2-enyl diphosphate site is built by H40 and H72. Residues H40 and H72 each coordinate dimethylallyl diphosphate. 2 residues coordinate isopentenyl diphosphate: H40 and H72. C94 is a [4Fe-4S] cluster binding site. H122 contacts (2E)-4-hydroxy-3-methylbut-2-enyl diphosphate. Position 122 (H122) interacts with dimethylallyl diphosphate. H122 provides a ligand contact to isopentenyl diphosphate. Residue E124 is the Proton donor of the active site. T161 contributes to the (2E)-4-hydroxy-3-methylbut-2-enyl diphosphate binding site. Residue C193 participates in [4Fe-4S] cluster binding. (2E)-4-hydroxy-3-methylbut-2-enyl diphosphate contacts are provided by S221, N223, and S264. 3 residues coordinate dimethylallyl diphosphate: S221, N223, and S264. Residues S221, N223, and S264 each contribute to the isopentenyl diphosphate site.

This sequence belongs to the IspH family. The cofactor is [4Fe-4S] cluster.

It carries out the reaction isopentenyl diphosphate + 2 oxidized [2Fe-2S]-[ferredoxin] + H2O = (2E)-4-hydroxy-3-methylbut-2-enyl diphosphate + 2 reduced [2Fe-2S]-[ferredoxin] + 2 H(+). The enzyme catalyses dimethylallyl diphosphate + 2 oxidized [2Fe-2S]-[ferredoxin] + H2O = (2E)-4-hydroxy-3-methylbut-2-enyl diphosphate + 2 reduced [2Fe-2S]-[ferredoxin] + 2 H(+). It participates in isoprenoid biosynthesis; dimethylallyl diphosphate biosynthesis; dimethylallyl diphosphate from (2E)-4-hydroxy-3-methylbutenyl diphosphate: step 1/1. It functions in the pathway isoprenoid biosynthesis; isopentenyl diphosphate biosynthesis via DXP pathway; isopentenyl diphosphate from 1-deoxy-D-xylulose 5-phosphate: step 6/6. Its function is as follows. Catalyzes the conversion of 1-hydroxy-2-methyl-2-(E)-butenyl 4-diphosphate (HMBPP) into a mixture of isopentenyl diphosphate (IPP) and dimethylallyl diphosphate (DMAPP). Acts in the terminal step of the DOXP/MEP pathway for isoprenoid precursor biosynthesis. The sequence is that of 4-hydroxy-3-methylbut-2-enyl diphosphate reductase from Dehalococcoides mccartyi (strain ATCC BAA-2100 / JCM 16839 / KCTC 5957 / BAV1).